A 322-amino-acid chain; its full sequence is Methionyl-tRNA formyltransferase (322 aa).

(6S)-5,6,7,8-tetrahydrofolate is bound at residue 115–118 (SLLP).

Belongs to the Fmt family.

The catalysed reaction is L-methionyl-tRNA(fMet) + (6R)-10-formyltetrahydrofolate = N-formyl-L-methionyl-tRNA(fMet) + (6S)-5,6,7,8-tetrahydrofolate + H(+). Attaches a formyl group to the free amino group of methionyl-tRNA(fMet). The formyl group appears to play a dual role in the initiator identity of N-formylmethionyl-tRNA by promoting its recognition by IF2 and preventing the misappropriation of this tRNA by the elongation apparatus. The sequence is that of Methionyl-tRNA formyltransferase from Treponema denticola (strain ATCC 35405 / DSM 14222 / CIP 103919 / JCM 8153 / KCTC 15104).